A 679-amino-acid chain; its full sequence is DNA-directed RNA polymerase subunit beta' (679 aa).

The Zn(2+) site is built by cysteine 69, cysteine 71, cysteine 87, and cysteine 90. Positions 489, 491, and 493 each coordinate Mg(2+).

This sequence belongs to the RNA polymerase beta' chain family. RpoC1 subfamily. In terms of assembly, in plastids the minimal PEP RNA polymerase catalytic core is composed of four subunits: alpha, beta, beta', and beta''. When a (nuclear-encoded) sigma factor is associated with the core the holoenzyme is formed, which can initiate transcription. Mg(2+) is required as a cofactor. It depends on Zn(2+) as a cofactor.

The protein resides in the plastid. The protein localises to the chloroplast. The enzyme catalyses RNA(n) + a ribonucleoside 5'-triphosphate = RNA(n+1) + diphosphate. In terms of biological role, DNA-dependent RNA polymerase catalyzes the transcription of DNA into RNA using the four ribonucleoside triphosphates as substrates. This Oenothera argillicola (Appalachian evening primrose) protein is DNA-directed RNA polymerase subunit beta'.